A 451-amino-acid polypeptide reads, in one-letter code: Tubulin alpha-1B chain (451 aa).

Positions 1 to 4 (MREC) match the MREC motif motif. G10, Q11, A12, and Q15 together coordinate GTP. K40 carries the N6,N6,N6-trimethyllysine; alternate modification. K40 carries the N6-acetyllysine; alternate modification. Position 48 is a phosphoserine (S48). Residues E71, A99, S140, G143, G144, T145, G146, T179, E183, N206, Y224, and N228 each coordinate GTP. A Mg(2+)-binding site is contributed by E71. Position 232 is a phosphoserine (S232). L252 serves as a coordination point for GTP. Residue E254 is part of the active site. 3'-nitrotyrosine is present on Y282. A Glycyl lysine isopeptide (Lys-Gly) (interchain with G-Cter in ubiquitin) cross-link involves residue K326. R339 is subject to Omega-N-methylarginine. K370 is covalently cross-linked (Glycyl lysine isopeptide (Lys-Gly) (interchain with G-Cter in ubiquitin)). Residues 432-451 (YEEVGVDSVEGEGEEEGEEY) are disordered. S439 carries the post-translational modification Phosphoserine. E443 and E445 each carry 5-glutamyl polyglutamate. Y451 carries the post-translational modification 3'-nitrotyrosine.

The protein belongs to the tubulin family. In terms of assembly, heterodimer of alpha- and beta-tubulin. A typical microtubule is a hollow water-filled tube with an outer diameter of 25 nm and an inner diameter of 15 nM. Alpha-beta heterodimers associate head-to-tail to form protofilaments running lengthwise along the microtubule wall with the beta-tubulin subunit facing the microtubule plus end conferring a structural polarity. Microtubules usually have 13 protofilaments but different protofilament numbers can be found in some organisms and specialized cells. Interacts with gamma-tubulin; the interaction allows microtubules to nucleate from the gamma-tubulin ring complex (gTuRC). Nascent microtubule interacts (via alpha-tubulin MREC motif) with TTC5/STRAP; this interaction may result in tubulin mRNA-targeted degradation. Component of sperm flagellar doublet microtubules. Mg(2+) is required as a cofactor. Post-translationally, some glutamate residues at the C-terminus are polyglutamylated, resulting in polyglutamate chains on the gamma-carboxyl group. Polyglutamylation plays a key role in microtubule severing by spastin (SPAST). SPAST preferentially recognizes and acts on microtubules decorated with short polyglutamate tails: severing activity by SPAST increases as the number of glutamates per tubulin rises from one to eight, but decreases beyond this glutamylation threshold. Glutamylation is also involved in cilia motility. Some glutamate residues at the C-terminus are monoglycylated but not polyglycylated due to the absence of functional TTLL10 in human. Monoglycylation is mainly limited to tubulin incorporated into cilia and flagella axonemes, which is required for their stability and maintenance. Flagella glycylation controls sperm motility. Both polyglutamylation and monoglycylation can coexist on the same protein on adjacent residues, and lowering glycylation levels increases polyglutamylation, and reciprocally. In terms of processing, acetylation of alpha chains at Lys-40 is located inside the microtubule lumen. This modification has been correlated with increased microtubule stability, intracellular transport and ciliary assembly. Post-translationally, methylation of alpha chains at Lys-40 is found in mitotic microtubules and is required for normal mitosis and cytokinesis contributing to genomic stability. Nitration of Tyr-451 is irreversible and interferes with normal dynein intracellular distribution. In terms of processing, undergoes a tyrosination/detyrosination cycle, the cyclic removal and re-addition of a C-terminal tyrosine residue by the enzymes tubulin tyrosine carboxypeptidase (MATCAP1/KIAA0895L, VASH1 or VASH2) and tubulin tyrosine ligase (TTL), respectively. Post-translationally, tyrosination promotes microtubule interaction with CAP-Gly domain-containing proteins such as CLIP1, CLIP2 and DCTN1. Tyrosination regulates the initiation of dynein-dynactin motility via interaction with DCTN1, which brings the dynein-dynactin complex into contact with microtubules. In neurons, tyrosinated tubulins mediate the initiation of retrograde vesicle transport. Detyrosination is involved in metaphase plate congression by guiding chromosomes during mitosis: detyrosination promotes interaction with CENPE, promoting pole-proximal transport of chromosomes toward the equator. Detyrosination increases microtubules-dependent mechanotransduction in dystrophic cardiac and skeletal muscle. In cardiomyocytes, detyrosinated microtubules are required to resist to contractile compression during contraction: detyrosination promotes association with desmin (DES) at force-generating sarcomeres, leading to buckled microtubules and mechanical resistance to contraction.

Its subcellular location is the cytoplasm. It is found in the cytoskeleton. The enzyme catalyses GTP + H2O = GDP + phosphate + H(+). Functionally, tubulin is the major constituent of microtubules, protein filaments consisting of alpha- and beta-tubulin heterodimers. Microtubules grow by the addition of GTP-tubulin dimers to the microtubule end, where a stabilizing cap forms. Below the cap, tubulin dimers are in GDP-bound state, owing to GTPase activity of alpha-tubulin. This chain is Tubulin alpha-1B chain (TUBA1B), found in Homo sapiens (Human).